The primary structure comprises 449 residues: Glucose-6-phosphate isomerase 1 (449 aa).

The residue at position 38 (threonine 38) is a Phosphothreonine. Glutamate 290 (proton donor) is an active-site residue. Residues histidine 311 and lysine 425 contribute to the active site.

This sequence belongs to the GPI family. As to quaternary structure, homodimer.

The protein localises to the cytoplasm. The enzyme catalyses alpha-D-glucose 6-phosphate = beta-D-fructose 6-phosphate. The protein operates within carbohydrate biosynthesis; gluconeogenesis. Its pathway is carbohydrate degradation; glycolysis; D-glyceraldehyde 3-phosphate and glycerone phosphate from D-glucose: step 2/4. Its function is as follows. Catalyzes the reversible isomerization of glucose-6-phosphate to fructose-6-phosphate. The polypeptide is Glucose-6-phosphate isomerase 1 (Geobacillus stearothermophilus (Bacillus stearothermophilus)).